The primary structure comprises 849 residues: Formin-like protein 4 (849 aa).

Residues 1–22 form the signal peptide; the sequence is MPPTLALLLFLALSAVAAVGGA. The disordered stretch occupies residues 36–104; sequence IEWTPPPSTA…RARGGGGGGT (69 aa). Residues 38–52 are compositionally biased toward pro residues; that stretch reads WTPPPSTASPSPPSP. Residues 53 to 64 are compositionally biased toward low complexity; the sequence is DFSSDPSTPATP. Residues 109–129 traverse the membrane as a helical segment; it reads IVVASAAAAAVLALLAFAAAF. Basic and acidic residues predominate over residues 185–194; the sequence is ARRGMCRDVD. The segment at 185–364 is disordered; the sequence is ARRGMCRDVD…PEPPTGPVSA (180 aa). Residues 234-246 show a composition bias toward gly residues; the sequence is GSGGGGGGEGGGT. The segment covering 247-279 has biased composition (low complexity); that stretch reads WSEASASSPRTTTASRRSLPSLTSDFFPTTPAA. Composition is skewed to pro residues over residues 280-297, 324-339, and 346-360; these read APVPAPAAAAPPPAPPAP, PSNPPPAPPPPPPPPS, and PKPPPPPPPPEPPTG. The 418-residue stretch at 406-823 folds into the FH2 domain; it reads EAAGDEPRPK…SARSFRISAA (418 aa).

It belongs to the formin-like family. Class-I subfamily.

It localises to the membrane. This is Formin-like protein 4 (FH4) from Oryza sativa subsp. japonica (Rice).